The following is a 288-amino-acid chain: Beta-lactamase PSE-1 (288 aa).

The first 17 residues, 1–17, serve as a signal peptide directing secretion; sequence MKFLLAFSLLIPSVVFA. Catalysis depends on Ser65, which acts as the Acyl-ester intermediate. The cysteines at positions 72 and 118 are disulfide-linked. A substrate-binding site is contributed by 229-231; that stretch reads RSG.

The protein belongs to the class-A beta-lactamase family. Monomer.

It carries out the reaction a beta-lactam + H2O = a substituted beta-amino acid. Inhibited by p-chloromercuribenzoate but not by cloxacillin. In terms of biological role, hydrolyzes penicillin, ampicillin and carbenicillin but not other antibiotics including oxacillin, methicillin and cloxacillin. The polypeptide is Beta-lactamase PSE-1 (Pseudomonas aeruginosa).